An 880-amino-acid chain; its full sequence is Translation initiation factor IF-2 (880 aa).

Composition is skewed to basic and acidic residues over residues His34–Val43, Thr59–Lys69, Arg82–His94, Asn110–Asn131, Lys167–Glu181, Gln230–Lys240, and Glu248–Asp261. Residues His34–Val297 form a disordered region. Residues Lys262–Asn275 are compositionally biased toward basic residues. Basic and acidic residues predominate over residues Gln276–Leu292. The region spanning Lys381–Lys550 is the tr-type G domain. Positions Gly390–Thr397 are G1. Residue Gly390 to Thr397 participates in GTP binding. Positions Gly415–Arg419 are G2. The interval Asp436–Gly439 is G3. GTP contacts are provided by residues Asp436–His440 and Asn490–Asp493. Positions Asn490–Asp493 are G4. The segment at Ser526–Lys528 is G5.

The protein belongs to the TRAFAC class translation factor GTPase superfamily. Classic translation factor GTPase family. IF-2 subfamily.

It is found in the cytoplasm. Its function is as follows. One of the essential components for the initiation of protein synthesis. Protects formylmethionyl-tRNA from spontaneous hydrolysis and promotes its binding to the 30S ribosomal subunits. Also involved in the hydrolysis of GTP during the formation of the 70S ribosomal complex. The polypeptide is Translation initiation factor IF-2 (Lactobacillus johnsonii (strain CNCM I-12250 / La1 / NCC 533)).